Reading from the N-terminus, the 284-residue chain is Shikimate dehydrogenase (NADP(+)) (284 aa).

Residues 20 to 22 and serine 67 each bind shikimate; that span reads SIS. Lysine 71 serves as the catalytic Proton acceptor. Residues asparagine 92 and aspartate 107 each coordinate shikimate. NADP(+) contacts are provided by residues 129-133 and valine 227; that span reads GAGGA. Tyrosine 229 is a shikimate binding site. Residue glycine 250 coordinates NADP(+).

It belongs to the shikimate dehydrogenase family. As to quaternary structure, homodimer.

The catalysed reaction is shikimate + NADP(+) = 3-dehydroshikimate + NADPH + H(+). It participates in metabolic intermediate biosynthesis; chorismate biosynthesis; chorismate from D-erythrose 4-phosphate and phosphoenolpyruvate: step 4/7. Involved in the biosynthesis of the chorismate, which leads to the biosynthesis of aromatic amino acids. Catalyzes the reversible NADPH linked reduction of 3-dehydroshikimate (DHSA) to yield shikimate (SA). This is Shikimate dehydrogenase (NADP(+)) from Streptococcus sanguinis (strain SK36).